Consider the following 535-residue polypeptide: Probable C4-dicarboxylate sensor kinase (535 aa).

The Cytoplasmic segment spans residues 1 to 11 (MNKKKLSIRWK). Residues 12-32 (ITILSYILVIFSFLIGGIVLI) traverse the membrane as a helical segment. The Extracellular segment spans residues 33–172 (GNIQHTEERE…IADILLHLKR (140 aa)). Residues 173-193 (DIAFIVVLTLGFGLAGSFLLA) form a helical membrane-spanning segment. Residues 194-535 (RHIKKQMFQL…MKGEEAQHGS (342 aa)) lie on the Cytoplasmic side of the membrane. A PAS domain is found at 213–276 (EERTATFHSM…PEIVERNKAV (64 aa)). The 196-residue stretch at 333–528 (VQNHEHMNKL…SFSIVFPMKG (196 aa)) folds into the Histidine kinase domain. A Phosphohistidine; by autocatalysis modification is found at histidine 336.

The protein localises to the cell membrane. The enzyme catalyses ATP + protein L-histidine = ADP + protein N-phospho-L-histidine.. Its function is as follows. Member of the two-component regulatory system DctS/DctR. Probably activates DctR by phosphorylation. Essential for expression of dctP. The chain is Probable C4-dicarboxylate sensor kinase (dctS) from Bacillus subtilis (strain 168).